Reading from the N-terminus, the 1250-residue chain is DNA-directed RNA polymerase subunit beta (1250 aa).

A disordered region spans residues 1139 to 1226 (GGAELAKPAP…DLFDEGDEDL (88 aa)). Composition is skewed to acidic residues over residues 1155–1183 (ESGE…DPEE) and 1207–1226 (ADDD…DEDL).

It belongs to the RNA polymerase beta chain family. In terms of assembly, the RNAP catalytic core consists of 2 alpha, 1 beta, 1 beta' and 1 omega subunit. When a sigma factor is associated with the core the holoenzyme is formed, which can initiate transcription.

The catalysed reaction is RNA(n) + a ribonucleoside 5'-triphosphate = RNA(n+1) + diphosphate. Its function is as follows. DNA-dependent RNA polymerase catalyzes the transcription of DNA into RNA using the four ribonucleoside triphosphates as substrates. In Symbiobacterium thermophilum (strain DSM 24528 / JCM 14929 / IAM 14863 / T), this protein is DNA-directed RNA polymerase subunit beta.